The chain runs to 119 residues: Large ribosomal subunit protein bL17 (119 aa).

This sequence belongs to the bacterial ribosomal protein bL17 family. Part of the 50S ribosomal subunit. Contacts protein L32.

The polypeptide is Large ribosomal subunit protein bL17 (Ureaplasma parvum serovar 3 (strain ATCC 27815 / 27 / NCTC 11736)).